The following is a 506-amino-acid chain: UDP-N-acetylmuramoylalanine--D-glutamate ligase (506 aa).

128 to 134 is an ATP binding site; the sequence is GTNGKTT.

The protein belongs to the MurCDEF family.

The protein resides in the cytoplasm. It catalyses the reaction UDP-N-acetyl-alpha-D-muramoyl-L-alanine + D-glutamate + ATP = UDP-N-acetyl-alpha-D-muramoyl-L-alanyl-D-glutamate + ADP + phosphate + H(+). The protein operates within cell wall biogenesis; peptidoglycan biosynthesis. Functionally, cell wall formation. Catalyzes the addition of glutamate to the nucleotide precursor UDP-N-acetylmuramoyl-L-alanine (UMA). In Albidiferax ferrireducens (strain ATCC BAA-621 / DSM 15236 / T118) (Rhodoferax ferrireducens), this protein is UDP-N-acetylmuramoylalanine--D-glutamate ligase.